The following is a 497-amino-acid chain: Glycerol kinase (497 aa).

Residue Thr-21 participates in ADP binding. Residues Thr-21 and Thr-22 each coordinate ATP. Thr-21 is a sn-glycerol 3-phosphate binding site. Residue Arg-25 coordinates ADP. Arg-88, Glu-89, Tyr-140, and Asp-244 together coordinate sn-glycerol 3-phosphate. The glycerol site is built by Arg-88, Glu-89, Tyr-140, Asp-244, and Gln-245. ADP is bound by residues Thr-266 and Gly-309. Residues Thr-266, Gly-309, Gln-313, and Gly-410 each coordinate ATP. The ADP site is built by Gly-410 and Asn-414.

Belongs to the FGGY kinase family.

It catalyses the reaction glycerol + ATP = sn-glycerol 3-phosphate + ADP + H(+). The protein operates within polyol metabolism; glycerol degradation via glycerol kinase pathway; sn-glycerol 3-phosphate from glycerol: step 1/1. Its activity is regulated as follows. Inhibited by fructose 1,6-bisphosphate (FBP). Its function is as follows. Key enzyme in the regulation of glycerol uptake and metabolism. Catalyzes the phosphorylation of glycerol to yield sn-glycerol 3-phosphate. This is Glycerol kinase from Gloeobacter violaceus (strain ATCC 29082 / PCC 7421).